The chain runs to 468 residues: GTPase Der (468 aa).

2 consecutive EngA-type G domains span residues 3-167 (PTLV…PYAE) and 179-352 (PVIA…TAAM). Residues 9 to 16 (GRPNVGKS), 56 to 60 (DTGGF), 119 to 122 (NKAE), 185 to 192 (GRPNVGKS), 232 to 236 (DTAGL), and 297 to 300 (NKWD) each bind GTP. Residues 353–437 (AHIPTPKLTR…PLRVEFRTGH (85 aa)) enclose the KH-like domain. Residues 434 to 468 (RTGHNPYAGKKAPPLTEEEARRAHSRRRRNRKKYG) are disordered. Residues 456-468 (AHSRRRRNRKKYG) are compositionally biased toward basic residues.

The protein belongs to the TRAFAC class TrmE-Era-EngA-EngB-Septin-like GTPase superfamily. EngA (Der) GTPase family. In terms of assembly, associates with the 50S ribosomal subunit.

Its function is as follows. GTPase that plays an essential role in the late steps of ribosome biogenesis. The polypeptide is GTPase Der (Nitrosomonas eutropha (strain DSM 101675 / C91 / Nm57)).